We begin with the raw amino-acid sequence, 55 residues long: Large ribosomal subunit protein bL32c (55 aa).

Belongs to the bacterial ribosomal protein bL32 family.

It is found in the plastid. The protein localises to the chloroplast. The sequence is that of Large ribosomal subunit protein bL32c from Daucus carota (Wild carrot).